We begin with the raw amino-acid sequence, 259 residues long: Imidazole glycerol phosphate synthase subunit HisF (259 aa).

Residues Asp-11 and Asp-130 contribute to the active site.

It belongs to the HisA/HisF family. As to quaternary structure, heterodimer of HisH and HisF.

The protein localises to the cytoplasm. It catalyses the reaction 5-[(5-phospho-1-deoxy-D-ribulos-1-ylimino)methylamino]-1-(5-phospho-beta-D-ribosyl)imidazole-4-carboxamide + L-glutamine = D-erythro-1-(imidazol-4-yl)glycerol 3-phosphate + 5-amino-1-(5-phospho-beta-D-ribosyl)imidazole-4-carboxamide + L-glutamate + H(+). It participates in amino-acid biosynthesis; L-histidine biosynthesis; L-histidine from 5-phospho-alpha-D-ribose 1-diphosphate: step 5/9. Functionally, IGPS catalyzes the conversion of PRFAR and glutamine to IGP, AICAR and glutamate. The HisF subunit catalyzes the cyclization activity that produces IGP and AICAR from PRFAR using the ammonia provided by the HisH subunit. The chain is Imidazole glycerol phosphate synthase subunit HisF from Polaromonas naphthalenivorans (strain CJ2).